Here is a 274-residue protein sequence, read N- to C-terminus: 2-dehydro-3-deoxyphosphooctonate aldolase (274 aa).

The protein belongs to the KdsA family.

Its subcellular location is the cytoplasm. The catalysed reaction is D-arabinose 5-phosphate + phosphoenolpyruvate + H2O = 3-deoxy-alpha-D-manno-2-octulosonate-8-phosphate + phosphate. The protein operates within carbohydrate biosynthesis; 3-deoxy-D-manno-octulosonate biosynthesis; 3-deoxy-D-manno-octulosonate from D-ribulose 5-phosphate: step 2/3. It participates in bacterial outer membrane biogenesis; lipopolysaccharide biosynthesis. The chain is 2-dehydro-3-deoxyphosphooctonate aldolase from Rickettsia conorii (strain ATCC VR-613 / Malish 7).